Consider the following 94-residue polypeptide: Large ribosomal subunit protein bL27 (94 aa).

Positions 1-9 (MLKMNLQFF) are excised as a propeptide.

Belongs to the bacterial ribosomal protein bL27 family. Post-translationally, the N-terminus is cleaved by ribosomal processing cysteine protease Prp.

The sequence is that of Large ribosomal subunit protein bL27 from Halalkalibacterium halodurans (strain ATCC BAA-125 / DSM 18197 / FERM 7344 / JCM 9153 / C-125) (Bacillus halodurans).